We begin with the raw amino-acid sequence, 201 residues long: Ubiquitin-conjugating enzyme E2 E2 (201 aa).

A compositionally biased stretch (basic and acidic residues) spans 1–10; the sequence is MSTEAQRVDD. A disordered region spans residues 1–55; it reads MSTEAQRVDDSPSTSGGSSDGDQRESVQQEPEREQVQPKKKEGKISSKTAAKLST. Serine 2 is modified (N-acetylserine). Residues serine 11, serine 15, serine 18, and serine 19 each carry the phosphoserine modification. Over residues 21 to 45 the composition is skewed to basic and acidic residues; that stretch reads GDQRESVQQEPEREQVQPKKKEGKI. Positions 46–55 are enriched in low complexity; it reads SSKTAAKLST. In terms of domain architecture, UBC core spans 55-201; sequence TSAKRIQKEL…ARQWTKRYAT (147 aa). Catalysis depends on cysteine 139, which acts as the Glycyl thioester intermediate.

Belongs to the ubiquitin-conjugating enzyme family. Autoubiquitinated in vitro.

It carries out the reaction S-ubiquitinyl-[E1 ubiquitin-activating enzyme]-L-cysteine + [E2 ubiquitin-conjugating enzyme]-L-cysteine = [E1 ubiquitin-activating enzyme]-L-cysteine + S-ubiquitinyl-[E2 ubiquitin-conjugating enzyme]-L-cysteine.. It functions in the pathway protein modification; protein ubiquitination. Accepts ubiquitin from the E1 complex and catalyzes its covalent attachment to other proteins. In vitro catalyzes 'Lys-11'- and 'Lys-48'-, as well as 'Lys-63'-linked polyubiquitination. Catalyzes the ISGylation of influenza A virus NS1 protein. This chain is Ubiquitin-conjugating enzyme E2 E2, found in Homo sapiens (Human).